The following is a 471-amino-acid chain: Collagen alpha-3(IV) chain (471 aa).

Residues 1–238 are triple-helical region; the sequence is GLPGRKGPVG…KGKPGDTGPP (238 aa). Residues 1-241 are disordered; sequence GLPGRKGPVG…PGDTGPPAAG (241 aa). Pro residues predominate over residues 52-61; it reads MPGPPGPPGS. Positions 106–108 match the Cell attachment site motif; the sequence is RGD. Residues 127–141 are compositionally biased toward pro residues; sequence PGPPGPPGQSGPKGP. Over residues 165–174 the composition is skewed to low complexity; the sequence is SAGEPGMQGE. Residues 175–187 are compositionally biased toward pro residues; the sequence is PGPPGPPGDPGPC. Hydroxyproline occurs at positions 232 and 238. Residues 246 to 470 enclose the Collagen IV NC1 domain; the sequence is GFVFTRHSQT…SRCQVCMKMR (225 aa). Cystine bridges form between cysteine 261–cysteine 352, cysteine 294–cysteine 349, cysteine 306–cysteine 312, cysteine 371–cysteine 466, cysteine 405–cysteine 463, and cysteine 417–cysteine 423. Residue methionine 334 forms an S-Lysyl-methionine sulfilimine (Met-Lys) (interchain with K-452) linkage. Residue lysine 452 forms an S-Lysyl-methionine sulfilimine (Lys-Met) (interchain with M-334) linkage.

It belongs to the type IV collagen family. As to quaternary structure, there are six type IV collagen isoforms, alpha 1(IV)-alpha 6(IV), each of which can form a triple helix structure with 2 other chains to generate type IV collagen network. The alpha 3(IV) chain forms a triple helical protomer with alpha 4(IV) and alpha 5(IV); this triple helical structure dimerizes through NC1-NC1 domain interactions such that the alpha 3(IV), alpha 4(IV) and alpha 5(IV) chains of one protomer connect with the alpha 5(IV), alpha 4(IV) and alpha 3(IV) chains of the opposite promoter, respectively. Interacts with ITGB3. Associates with LAMB2 at the neuromuscular junction and in GBM. In terms of processing, prolines at the third position of the tripeptide repeating unit (G-X-Y) are hydroxylated in some or all of the chains. Post-translationally, type IV collagens contain numerous cysteine residues which are involved in inter- and intramolecular disulfide bonding. 12 of these, located in the NC1 domain, are conserved in all known type IV collagens. The trimeric structure of the NC1 domains is stabilized by covalent bonds between Lys and Met residues. In terms of processing, phosphorylated. Thought to be phosphorylated by CERT, but CERT does not have kinase activity.

The protein localises to the secreted. The protein resides in the extracellular space. Its subcellular location is the extracellular matrix. It localises to the basement membrane. Its function is as follows. Type IV collagen is the major structural component of glomerular basement membranes (GBM), forming a 'chicken-wire' meshwork together with laminins, proteoglycans and entactin/nidogen. The protein is Collagen alpha-3(IV) chain (COL4A3) of Bos taurus (Bovine).